We begin with the raw amino-acid sequence, 213 residues long: Small ribosomal subunit protein uS4 (213 aa).

Positions 97–165 constitute an S4 RNA-binding domain; it reads RRLDNVVYRM…AKEQLRIKNA (69 aa).

This sequence belongs to the universal ribosomal protein uS4 family. In terms of assembly, part of the 30S ribosomal subunit. Contacts protein S5. The interaction surface between S4 and S5 is involved in control of translational fidelity.

One of the primary rRNA binding proteins, it binds directly to 16S rRNA where it nucleates assembly of the body of the 30S subunit. In terms of biological role, with S5 and S12 plays an important role in translational accuracy. The polypeptide is Small ribosomal subunit protein uS4 (Psychrobacter sp. (strain PRwf-1)).